We begin with the raw amino-acid sequence, 663 residues long: Putative ankyrin repeat protein R219 (663 aa).

ANK repeat units lie at residues F91–V118, D119–S148, A200–T229, D258–P288, and Y322–V351.

This Acanthamoeba polyphaga mimivirus (APMV) protein is Putative ankyrin repeat protein R219.